The primary structure comprises 350 residues: Biotin synthase (350 aa).

The 219-residue stretch at 38-256 (NHVQVSTLLS…IAVARIMMPE (219 aa)) folds into the Radical SAM core domain. [4Fe-4S] cluster-binding residues include cysteine 53, cysteine 57, and cysteine 60. [2Fe-2S] cluster is bound by residues cysteine 97, cysteine 128, cysteine 188, and arginine 260.

The protein belongs to the radical SAM superfamily. Biotin synthase family. In terms of assembly, homodimer. It depends on [4Fe-4S] cluster as a cofactor. [2Fe-2S] cluster serves as cofactor.

The enzyme catalyses (4R,5S)-dethiobiotin + (sulfur carrier)-SH + 2 reduced [2Fe-2S]-[ferredoxin] + 2 S-adenosyl-L-methionine = (sulfur carrier)-H + biotin + 2 5'-deoxyadenosine + 2 L-methionine + 2 oxidized [2Fe-2S]-[ferredoxin]. The protein operates within cofactor biosynthesis; biotin biosynthesis; biotin from 7,8-diaminononanoate: step 2/2. Functionally, catalyzes the conversion of dethiobiotin (DTB) to biotin by the insertion of a sulfur atom into dethiobiotin via a radical-based mechanism. In Aliivibrio fischeri (strain MJ11) (Vibrio fischeri), this protein is Biotin synthase.